We begin with the raw amino-acid sequence, 303 residues long: Methionyl-tRNA formyltransferase (303 aa).

A (6S)-5,6,7,8-tetrahydrofolate-binding site is contributed by 108–111 (SDLP).

It belongs to the Fmt family.

The enzyme catalyses L-methionyl-tRNA(fMet) + (6R)-10-formyltetrahydrofolate = N-formyl-L-methionyl-tRNA(fMet) + (6S)-5,6,7,8-tetrahydrofolate + H(+). In terms of biological role, attaches a formyl group to the free amino group of methionyl-tRNA(fMet). The formyl group appears to play a dual role in the initiator identity of N-formylmethionyl-tRNA by promoting its recognition by IF2 and preventing the misappropriation of this tRNA by the elongation apparatus. In Rickettsia rickettsii (strain Iowa), this protein is Methionyl-tRNA formyltransferase.